Consider the following 312-residue polypeptide: Pyrimidine-specific ribonucleoside hydrolase RihA (312 aa).

The active site involves histidine 240.

It belongs to the IUNH family. RihA subfamily.

Hydrolyzes cytidine or uridine to ribose and cytosine or uracil, respectively. This is Pyrimidine-specific ribonucleoside hydrolase RihA from Citrobacter koseri (strain ATCC BAA-895 / CDC 4225-83 / SGSC4696).